A 25-amino-acid chain; its full sequence is Non-specific lipid-transfer protein 3 (25 aa).

As to expression, seeds (at protein level).

Plant non-specific lipid-transfer proteins transfer phospholipids as well as galactolipids across membranes. May play a role in wax or cutin deposition in the cell walls of expanding epidermal cells and certain secretory tissues. Has antibacterial and antifungal activity. Displays antibacterial activity towards both Gram-negative bacteria, P.carotovorum (IC(50)=11.5 uM) and P.syringae (IC(50)=12.0 uM), and Gram-positive bacterium C.michiganensis subsp michiganense (IC(50)=11.2 uM). Also displays antifungal activity towards A.niger VKM F-33 (IC(50)=1.05 uM) and B.cinerea TSKHA (IC(50)=1.88 uM) and relatively moderate activity towards B.sorokiniana VKM F-1448 (IC(50)=1.55 uM). Displays some inhibitory activity towards P.infestans OSV12. The sequence is that of Non-specific lipid-transfer protein 3 from Nigella sativa (Black cumin).